Here is a 466-residue protein sequence, read N- to C-terminus: MPHSYDYDAIVIGSGPGGEGAAMGLVKQGARVAVIERYQNVGGGCTHWGTIPSKALRHAVSRIIEFNQNPLYSDHSRLLRSSFADILNHADNVINQQTRMRQGFYERNHCEILQGNARFVDEHTLALDCPDGSVETLTAEKFVIACGSRPYHPTDVDFTHPRIYDSDSILSMHHEPRHVLIYGAGVIGCEYASIFRGMDVKVDLINTRDRLLAFLDQEMSDSLSYHFWNSGVVIRHNEEYEKIEGCDDGVIMHLKSGKKLKADCLLYANGRTGNTDSLALQNIGLETDSRGQLKVNSMYQTAQPHVYAVGDVIGYPSLASAAYDQGRIAAQALVKGEATAHLIEDIPTGIYTIPEISSVGKTEQQLTAMKVPYEVGRAQFKHLARAQIVGMNVGTLKILFHRETKEILGIHCFGERAAEIIHIGQAIMEQKGGGNTIEYFVNTTFNYPTMAEAYRVAALNGLNRLF.

36-45 (ERYQNVGGGC) is a binding site for FAD.

Belongs to the class-I pyridine nucleotide-disulfide oxidoreductase family. Requires FAD as cofactor.

It localises to the cytoplasm. The enzyme catalyses NAD(+) + NADPH = NADH + NADP(+). Functionally, conversion of NADPH, generated by peripheral catabolic pathways, to NADH, which can enter the respiratory chain for energy generation. This is Soluble pyridine nucleotide transhydrogenase from Escherichia fergusonii (strain ATCC 35469 / DSM 13698 / CCUG 18766 / IAM 14443 / JCM 21226 / LMG 7866 / NBRC 102419 / NCTC 12128 / CDC 0568-73).